The sequence spans 578 residues: Kelch-like protein 30 (578 aa).

The BTB domain occupies 33–100; the sequence is ADVTLLVGGR…VYTGRLTITQ (68 aa). The 103-residue stretch at 153–255 folds into the BACK domain; sequence KAWAFLRENF…EACRAALSQG (103 aa). Kelch repeat units follow at residues 270-326, 327-377, 378-422, 424-471, 473-513, and 514-563; these read VLVV…ALNN, NIYV…ALNG, EIYV…GCRG, LYLV…ALHG, LYLI…PLGD, and ALYV…TVFL.

This is Kelch-like protein 30 (KLHL30) from Homo sapiens (Human).